A 170-amino-acid polypeptide reads, in one-letter code: Universal stress protein MJ0531 (170 aa).

Belongs to the universal stress protein A family.

The polypeptide is Universal stress protein MJ0531 (Methanocaldococcus jannaschii (strain ATCC 43067 / DSM 2661 / JAL-1 / JCM 10045 / NBRC 100440) (Methanococcus jannaschii)).